The sequence spans 111 residues: uncharacterized protein (111 aa).

The N-terminal stretch at 1–18 (MGKSMEEGIFVKVFPSKA) is a signal peptide.

This is an uncharacterized protein from Acidianus convivator (ATV).